The primary structure comprises 591 residues: Oxaloacetate decarboxylase alpha chain (591 aa).

Residues 3–263 form the Pyruvate carboxyltransferase domain; that stretch reads IAITDVVLRD…DTGLDILKLE (261 aa). The 74-residue stretch at 518–591 folds into the Biotinyl-binding domain; sequence PAGAGTPVTA…SVGDTLMTLA (74 aa). N6-biotinyllysine is present on K557.

As to quaternary structure, composed of three chains (alpha, beta, and gamma). It depends on biotin as a cofactor.

It catalyses the reaction oxaloacetate + 2 Na(+)(in) + H(+) = pyruvate + 2 Na(+)(out) + CO2. Functionally, catalyzes the decarboxylation of oxaloacetate coupled to Na(+) translocation. This Salmonella typhi protein is Oxaloacetate decarboxylase alpha chain (oadA1).